We begin with the raw amino-acid sequence, 320 residues long: Methionyl-tRNA formyltransferase (320 aa).

112 to 115 is a (6S)-5,6,7,8-tetrahydrofolate binding site; that stretch reads SLLP.

It belongs to the Fmt family.

The enzyme catalyses L-methionyl-tRNA(fMet) + (6R)-10-formyltetrahydrofolate = N-formyl-L-methionyl-tRNA(fMet) + (6S)-5,6,7,8-tetrahydrofolate + H(+). Its function is as follows. Attaches a formyl group to the free amino group of methionyl-tRNA(fMet). The formyl group appears to play a dual role in the initiator identity of N-formylmethionyl-tRNA by promoting its recognition by IF2 and preventing the misappropriation of this tRNA by the elongation apparatus. The polypeptide is Methionyl-tRNA formyltransferase (Allorhizobium ampelinum (strain ATCC BAA-846 / DSM 112012 / S4) (Agrobacterium vitis (strain S4))).